The chain runs to 24 residues: Myotoxin TmC4-47.2 (24 aa).

The segment at 1–24 is disordered; it reads KASSSAPKGWTHHGSRFTFHRGSM. A compositionally biased stretch (basic residues) spans 10-24; the sequence is WTHHGSRFTFHRGSM. One can recognise a C-type lectin domain in the interval 13-24; sequence HGSRFTFHRGSM.

As to expression, expressed by the venom gland.

It localises to the secreted. Its function is as follows. Able to depolarize frog skeletal muscle fibers, but has no effects on squid giant axons. Tetrodotoxin is able to partially antagonize the depolarization. Induces myonecrosis. This is Myotoxin TmC4-47.2 from Thalassophryne maculosa (Cano toadfish).